The following is a 397-amino-acid chain: Anhydro-N-acetylmuramic acid kinase (397 aa).

Residue 21–28 (GTSLDGVD) coordinates ATP. Residues 373–384 (TPTNLPSVTGAS) show a composition bias toward polar residues. The interval 373-397 (TPTNLPSVTGASARTPLGSLSVPGP) is disordered.

This sequence belongs to the anhydro-N-acetylmuramic acid kinase family.

It carries out the reaction 1,6-anhydro-N-acetyl-beta-muramate + ATP + H2O = N-acetyl-D-muramate 6-phosphate + ADP + H(+). It participates in amino-sugar metabolism; 1,6-anhydro-N-acetylmuramate degradation. It functions in the pathway cell wall biogenesis; peptidoglycan recycling. In terms of biological role, catalyzes the specific phosphorylation of 1,6-anhydro-N-acetylmuramic acid (anhMurNAc) with the simultaneous cleavage of the 1,6-anhydro ring, generating MurNAc-6-P. Is required for the utilization of anhMurNAc either imported from the medium or derived from its own cell wall murein, and thus plays a role in cell wall recycling. This Salinibacter ruber (strain DSM 13855 / M31) protein is Anhydro-N-acetylmuramic acid kinase.